The following is a 146-amino-acid chain: uncharacterized protein (146 aa).

Residues 6–26 (IPIFVISLSNISHIILAIFFF) form a helical membrane-spanning segment.

It is found in the membrane. This is an uncharacterized protein from Caenorhabditis elegans.